Consider the following 439-residue polypeptide: 26S rRNA (cytosine-C(5))-methyltransferase nsun-5 (439 aa).

Residues D266, D293, and D313 each coordinate S-adenosyl-L-methionine. C366 acts as the Nucleophile in catalysis.

It belongs to the class I-like SAM-binding methyltransferase superfamily. RsmB/NOP family.

The enzyme catalyses a cytidine in 26S rRNA + S-adenosyl-L-methionine = a 5-methylcytidine in 26S rRNA + S-adenosyl-L-homocysteine + H(+). Functionally, S-adenosyl-L-methionine-dependent methyltransferase which methylates the carbon-5 position of cytosine 2381 to 5-methylcytosine (m5C2381) in 26S rRNA. Plays a role in the production of mature 5S, 5.8S, 18S and 26S rRNAs and promotes the processing of the internally transcribed spacer 2 (ITS2), which separates the 5.8S and 26S rRNAs on large pre-rRNA precursors. May play a role in the translation of leucine and proline codons. May play a role in maintaining ribosomal frameshifting in response to osmotic stress. Not required for global translation. The chain is 26S rRNA (cytosine-C(5))-methyltransferase nsun-5 from Caenorhabditis elegans.